Consider the following 154-residue polypeptide: Protein X (154 aa).

The interval 68–117 (PCALRFTSARRMETTVNAHQFLPKVLYKRTLGLSVMSTTDLEAYFKDCLF) is mitochondrial targeting sequence.

Belongs to the orthohepadnavirus protein X family. As to quaternary structure, may form homodimer. May interact with host CEBPA, CFLAR, CREB1, DDB1, E4F1, HBXIP, HSPD1/HSP60, NFKBIA, POLR2E and SMAD4. Interacts with host SMC5-SMC6 complex and induces its degradation. Interacts with host TRPC4AP; leading to prevent ubiquitination of TRPC4AP. Interacts with host PLSCR1; this interaction promotes ubiquitination and degradation of HBx and impairs HBx-mediated cell proliferation. A fraction may be phosphorylated in insect cells and HepG2 cells, a human hepatoblastoma cell line. Phosphorylated in vitro by host protein kinase C or mitogen-activated protein kinase. N-acetylated in insect cells.

It localises to the host cytoplasm. Its subcellular location is the host nucleus. The protein localises to the host mitochondrion. Functionally, multifunctional protein that plays a role in silencing host antiviral defenses and promoting viral transcription. Does not seem to be essential for HBV infection. May be directly involved in development of cirrhosis and liver cancer (hepatocellular carcinoma). Most of cytosolic activities involve modulation of cytosolic calcium. The effect on apoptosis is controversial depending on the cell types in which the studies have been conducted. May induce apoptosis by localizing in mitochondria and causing loss of mitochondrial membrane potential. May also modulate apoptosis by binding host CFLAR, a key regulator of the death-inducing signaling complex (DISC). Promotes viral transcription by using the host E3 ubiquitin ligase DDB1 to target the SMC5-SMC6 complex to proteasomal degradation. This host complex would otherwise bind to viral episomal DNA, and prevents its transcription. Moderately stimulates transcription of many different viral and cellular transcription elements. Promoters and enhancers stimulated by HBx contain DNA binding sites for NF-kappa-B, AP-1, AP-2, c-EBP, ATF/CREB, or the calcium-activated factor NF-AT. The chain is Protein X from Homo sapiens (Human).